Consider the following 873-residue polypeptide: Protein translocase subunit SecA (873 aa).

ATP contacts are provided by residues Gln-85, 103-107, and Asp-492; that span reads GEGKT. Basic and acidic residues predominate over residues 835 to 856; it reads RYAEEEGKQPIRKENQIGRNDD. The tract at residues 835 to 873 is disordered; it reads RYAEEEGKQPIRKENQIGRNDDCPCGSGKKYKKCCGKNA. 4 residues coordinate Zn(2+): Cys-857, Cys-859, Cys-868, and Cys-869. A compositionally biased stretch (basic residues) spans 863 to 873; it reads KKYKKCCGKNA.

This sequence belongs to the SecA family. In terms of assembly, monomer and homodimer. Part of the essential Sec protein translocation apparatus which comprises SecA, SecYEG and auxiliary proteins SecDF. Other proteins may also be involved. The cofactor is Zn(2+).

It localises to the cell membrane. It is found in the cytoplasm. The catalysed reaction is ATP + H2O + cellular proteinSide 1 = ADP + phosphate + cellular proteinSide 2.. In terms of biological role, part of the Sec protein translocase complex. Interacts with the SecYEG preprotein conducting channel. Has a central role in coupling the hydrolysis of ATP to the transfer of proteins into and across the cell membrane, serving as an ATP-driven molecular motor driving the stepwise translocation of polypeptide chains across the membrane. This is Protein translocase subunit SecA from Desulforamulus reducens (strain ATCC BAA-1160 / DSM 100696 / MI-1) (Desulfotomaculum reducens).